Consider the following 574-residue polypeptide: K(+)/H(+) antiporter NhaP2 (574 aa).

Helical transmembrane passes span 6–26, 30–50, 58–78, 87–107, 109–129, 173–193, 196–216, 219–239, 242–262, 271–291, 299–319, 335–355, and 359–379; these read INSF…LSPM, LGIP…EDGL, YSTA…DGGM, VALW…TSIT, LMAA…GAIV, IAIL…VSFI, FGLG…LVNL, LAEG…YAVS, LGGS…NKPT, VLDG…GLLL, ILLP…PLAV, WFIS…VFPM, and LPGA…SLLI. The RCK C-terminal domain maps to 405–486; sequence SGVEIYPSSE…LDALSHLFSQ (82 aa).

Belongs to the monovalent cation:proton antiporter 1 (CPA1) transporter (TC 2.A.36) family. NhaP2 subfamily.

The protein localises to the cell inner membrane. The enzyme catalyses K(+)(in) + H(+)(out) = K(+)(out) + H(+)(in). Its function is as follows. K(+)/H(+) antiporter that extrudes potassium in exchange for external protons and maintains the internal concentration of potassium under toxic levels. In Shewanella sp. (strain W3-18-1), this protein is K(+)/H(+) antiporter NhaP2.